A 296-amino-acid polypeptide reads, in one-letter code: Nucleotide-binding protein Rmet_0297 (296 aa).

Residue 8–15 (GISGSGKS) participates in ATP binding. 57-60 (DIRS) is a GTP binding site.

Belongs to the RapZ-like family.

Its function is as follows. Displays ATPase and GTPase activities. This chain is Nucleotide-binding protein Rmet_0297, found in Cupriavidus metallidurans (strain ATCC 43123 / DSM 2839 / NBRC 102507 / CH34) (Ralstonia metallidurans).